A 582-amino-acid chain; its full sequence is Acylamino-acid-releasing enzyme (582 aa).

Catalysis depends on charge relay system residues S445, D524, and H556.

The protein belongs to the peptidase S9C family.

It localises to the cytoplasm. It catalyses the reaction Cleavage of an N-acetyl or N-formyl amino acid from the N-terminus of a polypeptide.. In terms of biological role, this enzyme catalyzes the hydrolysis of the N-terminal peptide bond of an N-acetylated peptide to generate an N-acetylated amino acid and a peptide with a free N-terminus. This Aeropyrum pernix (strain ATCC 700893 / DSM 11879 / JCM 9820 / NBRC 100138 / K1) protein is Acylamino-acid-releasing enzyme.